The following is a 390-amino-acid chain: 1-deoxy-D-xylulose 5-phosphate reductoisomerase (390 aa).

NADPH-binding residues include T10, G11, S12, I13, G36, R37, N38, and N121. K122 is a binding site for 1-deoxy-D-xylulose 5-phosphate. Residue E123 coordinates NADPH. D147 provides a ligand contact to Mn(2+). Residues S148, E149, S173, and H196 each coordinate 1-deoxy-D-xylulose 5-phosphate. E149 contacts Mn(2+). An NADPH-binding site is contributed by G202. 1-deoxy-D-xylulose 5-phosphate is bound by residues S209, N214, K215, and E218. Residue E218 participates in Mn(2+) binding. A disordered region spans residues 367–390; sequence AASEHGRREAEKRVGARAHAPAGR. Basic and acidic residues predominate over residues 370 to 380; the sequence is EHGRREAEKRV.

Belongs to the DXR family. Requires Mg(2+) as cofactor. Mn(2+) serves as cofactor.

The catalysed reaction is 2-C-methyl-D-erythritol 4-phosphate + NADP(+) = 1-deoxy-D-xylulose 5-phosphate + NADPH + H(+). Its pathway is isoprenoid biosynthesis; isopentenyl diphosphate biosynthesis via DXP pathway; isopentenyl diphosphate from 1-deoxy-D-xylulose 5-phosphate: step 1/6. Catalyzes the NADPH-dependent rearrangement and reduction of 1-deoxy-D-xylulose-5-phosphate (DXP) to 2-C-methyl-D-erythritol 4-phosphate (MEP). The chain is 1-deoxy-D-xylulose 5-phosphate reductoisomerase from Anaeromyxobacter sp. (strain K).